A 316-amino-acid polypeptide reads, in one-letter code: tRNA-cytidine(32) 2-sulfurtransferase (316 aa).

Residues 52–57 (SGGKDS) carry the PP-loop motif motif. 3 residues coordinate [4Fe-4S] cluster: Cys127, Cys130, and Cys218.

Belongs to the TtcA family. In terms of assembly, homodimer. Mg(2+) serves as cofactor. Requires [4Fe-4S] cluster as cofactor.

The protein localises to the cytoplasm. It catalyses the reaction cytidine(32) in tRNA + S-sulfanyl-L-cysteinyl-[cysteine desulfurase] + AH2 + ATP = 2-thiocytidine(32) in tRNA + L-cysteinyl-[cysteine desulfurase] + A + AMP + diphosphate + H(+). It participates in tRNA modification. Catalyzes the ATP-dependent 2-thiolation of cytidine in position 32 of tRNA, to form 2-thiocytidine (s(2)C32). The sulfur atoms are provided by the cysteine/cysteine desulfurase (IscS) system. The protein is tRNA-cytidine(32) 2-sulfurtransferase of Haemophilus ducreyi (strain 35000HP / ATCC 700724).